Reading from the N-terminus, the 153-residue chain is Xanthine-guanine phosphoribosyltransferase (153 aa).

Residues 37–38 (RG) and 89–97 (DDLVDTGNT) each bind 5-phospho-alpha-D-ribose 1-diphosphate. D90 is a binding site for Mg(2+). The guanine site is built by D93 and I136. Positions 93 and 136 each coordinate xanthine. GMP contacts are provided by residues 93-97 (DTGNT) and 135-136 (WI).

The protein belongs to the purine/pyrimidine phosphoribosyltransferase family. XGPT subfamily. Homotetramer. Requires Mg(2+) as cofactor.

Its subcellular location is the cell inner membrane. It carries out the reaction GMP + diphosphate = guanine + 5-phospho-alpha-D-ribose 1-diphosphate. It catalyses the reaction XMP + diphosphate = xanthine + 5-phospho-alpha-D-ribose 1-diphosphate. The catalysed reaction is IMP + diphosphate = hypoxanthine + 5-phospho-alpha-D-ribose 1-diphosphate. Its pathway is purine metabolism; GMP biosynthesis via salvage pathway; GMP from guanine: step 1/1. The protein operates within purine metabolism; XMP biosynthesis via salvage pathway; XMP from xanthine: step 1/1. Its function is as follows. Purine salvage pathway enzyme that catalyzes the transfer of the ribosyl-5-phosphate group from 5-phospho-alpha-D-ribose 1-diphosphate (PRPP) to the N9 position of the 6-oxopurines guanine and xanthine to form the corresponding ribonucleotides GMP (guanosine 5'-monophosphate) and XMP (xanthosine 5'-monophosphate), with the release of PPi. To a lesser extent, also acts on hypoxanthine. This is Xanthine-guanine phosphoribosyltransferase from Pasteurella multocida (strain Pm70).